A 228-amino-acid chain; its full sequence is Urease accessory protein UreF (228 aa).

This sequence belongs to the UreF family. UreD, UreF and UreG form a complex that acts as a GTP-hydrolysis-dependent molecular chaperone, activating the urease apoprotein by helping to assemble the nickel containing metallocenter of UreC. The UreE protein probably delivers the nickel.

Its subcellular location is the cytoplasm. Its function is as follows. Required for maturation of urease via the functional incorporation of the urease nickel metallocenter. The protein is Urease accessory protein UreF of Prochlorococcus marinus (strain AS9601).